Here is a 644-residue protein sequence, read N- to C-terminus: Macrolide export ATP-binding/permease protein MacB (644 aa).

At 1–268 (MNIIEIKQLN…SAIVAHKMRS (268 aa)) the chain is on the cytoplasmic side. Residues 4 to 242 (IEIKQLNRYF…VKNPSVFKGR (239 aa)) form the ABC transporter domain. 40-47 (GQSGSGKS) lines the ATP pocket. The helical transmembrane segment at 269 to 289 (LLTMLGIIIGITSVVSVVALG) threads the bilayer. Topologically, residues 290-523 (NGSQQKILEN…TGTMKLLISS (234 aa)) are periplasmic. The helical transmembrane segment at 524–544 (IAFISLIVGGIGVMNIMLVSV) threads the bilayer. The Cytoplasmic segment spans residues 545–573 (TERTKEIGVRMAIGARQINILQQFLIEAV). Residues 574-594 (LICLIGGVAGILLSVLIGVLF) form a helical membrane-spanning segment. The Periplasmic segment spans residues 595–607 (NSFITDFSMDFST). A helical membrane pass occupies residues 608–628 (ASIVTAVLFSTLIGVLFGYMP). Residues 629-644 (AKKAAELNPITALAQE) lie on the Cytoplasmic side of the membrane.

This sequence belongs to the ABC transporter superfamily. Macrolide exporter (TC 3.A.1.122) family. As to quaternary structure, homodimer. Part of the tripartite efflux system MacAB-TdeA, which is composed of an inner membrane transporter, MacB, a periplasmic membrane fusion protein, MacA, and an outer membrane component, TdeA. The complex forms a large protein conduit and can translocate molecules across both the inner and outer membranes. Interacts with MacA.

Its subcellular location is the cell inner membrane. Part of the tripartite efflux system MacAB-TdeA. MacB is a non-canonical ABC transporter that contains transmembrane domains (TMD), which form a pore in the inner membrane, and an ATP-binding domain (NBD), which is responsible for energy generation. Confers resistance against macrolides. The sequence is that of Macrolide export ATP-binding/permease protein MacB from Aggregatibacter actinomycetemcomitans (Actinobacillus actinomycetemcomitans).